The following is a 425-amino-acid chain: Serine--tRNA ligase (425 aa).

An L-serine-binding site is contributed by 230-232 (TAE). Position 261 to 263 (261 to 263 (RSE)) interacts with ATP. An L-serine-binding site is contributed by E284. Residue 348–351 (EISS) coordinates ATP. S384 is an L-serine binding site.

Belongs to the class-II aminoacyl-tRNA synthetase family. Type-1 seryl-tRNA synthetase subfamily. As to quaternary structure, homodimer. The tRNA molecule binds across the dimer.

The protein resides in the cytoplasm. The catalysed reaction is tRNA(Ser) + L-serine + ATP = L-seryl-tRNA(Ser) + AMP + diphosphate + H(+). It catalyses the reaction tRNA(Sec) + L-serine + ATP = L-seryl-tRNA(Sec) + AMP + diphosphate + H(+). It functions in the pathway aminoacyl-tRNA biosynthesis; selenocysteinyl-tRNA(Sec) biosynthesis; L-seryl-tRNA(Sec) from L-serine and tRNA(Sec): step 1/1. Its function is as follows. Catalyzes the attachment of serine to tRNA(Ser). Is also able to aminoacylate tRNA(Sec) with serine, to form the misacylated tRNA L-seryl-tRNA(Sec), which will be further converted into selenocysteinyl-tRNA(Sec). This is Serine--tRNA ligase from Streptococcus equi subsp. zooepidemicus (strain MGCS10565).